The chain runs to 141 residues: Nucleoside diphosphate kinase (141 aa).

Positions 11, 59, 87, 93, 104, and 114 each coordinate ATP. H117 acts as the Pros-phosphohistidine intermediate in catalysis.

It belongs to the NDK family. In terms of assembly, homotetramer. Requires Mg(2+) as cofactor.

The protein localises to the cytoplasm. The catalysed reaction is a 2'-deoxyribonucleoside 5'-diphosphate + ATP = a 2'-deoxyribonucleoside 5'-triphosphate + ADP. It catalyses the reaction a ribonucleoside 5'-diphosphate + ATP = a ribonucleoside 5'-triphosphate + ADP. Major role in the synthesis of nucleoside triphosphates other than ATP. The ATP gamma phosphate is transferred to the NDP beta phosphate via a ping-pong mechanism, using a phosphorylated active-site intermediate. This chain is Nucleoside diphosphate kinase, found in Serratia proteamaculans (strain 568).